Reading from the N-terminus, the 695-residue chain is Highly divergent homeobox (695 aa).

2 consecutive DNA-binding regions (homeobox) follow at residues 3 to 63 and 440 to 503; these read LRSV…SSKS and ALQD…RLMG. Residues 56–81 are disordered; the sequence is RRKMSSKSALESGGAPPGTAHTAPSV. The segment at 653–695 is disordered; it reads QQALLSDLPPELEEMDFNHTSPEPDDTSFSLSSLSEKNASDSL. Residues 679–695 show a composition bias toward polar residues; sequence TSFSLSSLSEKNASDSL.

It is found in the nucleus. The sequence is that of Highly divergent homeobox (HDX) from Gallus gallus (Chicken).